The sequence spans 406 residues: Tryptophan synthase beta chain (406 aa).

K99 is subject to N6-(pyridoxal phosphate)lysine.

It belongs to the TrpB family. As to quaternary structure, tetramer of two alpha and two beta chains. Pyridoxal 5'-phosphate is required as a cofactor.

The enzyme catalyses (1S,2R)-1-C-(indol-3-yl)glycerol 3-phosphate + L-serine = D-glyceraldehyde 3-phosphate + L-tryptophan + H2O. It participates in amino-acid biosynthesis; L-tryptophan biosynthesis; L-tryptophan from chorismate: step 5/5. The beta subunit is responsible for the synthesis of L-tryptophan from indole and L-serine. Essential for production of nod factors and establishment of symbiosis. The polypeptide is Tryptophan synthase beta chain (Rhizobium etli (strain ATCC 51251 / DSM 11541 / JCM 21823 / NBRC 15573 / CFN 42)).